Here is a 478-residue protein sequence, read N- to C-terminus: Elongation factor Tu, chloroplastic (478 aa).

Low complexity predominate over residues 1–29 (MASISAATATSSTKLVSSNSTNPLLPSST). Residues 1 to 31 (MASISAATATSSTKLVSSNSTNPLLPSSTKP) form a disordered region. The N-terminal 69 residues, 1–69 (MASISAATAT…THRHRRFTVR (69 aa)), are a transit peptide targeting the chloroplast. In terms of domain architecture, tr-type G spans 79–283 (KPHVNIGTIG…AVDSYIPIPV (205 aa)). Positions 88–95 (GHVDHGKT) are G1. 88-95 (GHVDHGKT) serves as a coordination point for GTP. A G2 region spans residues 129-133 (GITIN). The tract at residues 150-153 (DCPG) is G3. GTP-binding positions include 150 to 154 (DCPGH) and 205 to 208 (NKQD). The interval 205–208 (NKQD) is G4. Residues 243–245 (SAL) form a G5 region.

This sequence belongs to the TRAFAC class translation factor GTPase superfamily. Classic translation factor GTPase family. EF-Tu/EF-1A subfamily.

It localises to the plastid. The protein localises to the chloroplast. This protein promotes the GTP-dependent binding of aminoacyl-tRNA to the A-site of ribosomes during protein biosynthesis. The polypeptide is Elongation factor Tu, chloroplastic (TUFA) (Nicotiana tabacum (Common tobacco)).